We begin with the raw amino-acid sequence, 436 residues long: GTPase Der (436 aa).

EngA-type G domains lie at 4 to 167 and 175 to 351; these read PIVA…PDEA and IRFS…DNHR. GTP-binding positions include 10–17, 57–61, 119–122, 181–188, 229–233, and 294–297; these read GRPNVGKS, DTGGI, NKVD, DTAGM, and NKWD. In terms of domain architecture, KH-like spans 352–436; it reads KRITSSTLND…PIKLIVRARK (85 aa).

Belongs to the TRAFAC class TrmE-Era-EngA-EngB-Septin-like GTPase superfamily. EngA (Der) GTPase family. As to quaternary structure, associates with the 50S ribosomal subunit.

In terms of biological role, GTPase that plays an essential role in the late steps of ribosome biogenesis. This chain is GTPase Der, found in Leuconostoc mesenteroides subsp. mesenteroides (strain ATCC 8293 / DSM 20343 / BCRC 11652 / CCM 1803 / JCM 6124 / NCDO 523 / NBRC 100496 / NCIMB 8023 / NCTC 12954 / NRRL B-1118 / 37Y).